We begin with the raw amino-acid sequence, 648 residues long: 1-deoxy-D-xylulose-5-phosphate synthase (648 aa).

Thiamine diphosphate is bound by residues H79 and 120–122 (GHA). D152 provides a ligand contact to Mg(2+). Thiamine diphosphate contacts are provided by residues 153–154 (GS), N181, F293, and E377. A Mg(2+)-binding site is contributed by N181.

This sequence belongs to the transketolase family. DXPS subfamily. As to quaternary structure, homodimer. Mg(2+) is required as a cofactor. The cofactor is thiamine diphosphate.

It carries out the reaction D-glyceraldehyde 3-phosphate + pyruvate + H(+) = 1-deoxy-D-xylulose 5-phosphate + CO2. It functions in the pathway metabolic intermediate biosynthesis; 1-deoxy-D-xylulose 5-phosphate biosynthesis; 1-deoxy-D-xylulose 5-phosphate from D-glyceraldehyde 3-phosphate and pyruvate: step 1/1. Its function is as follows. Catalyzes the acyloin condensation reaction between C atoms 2 and 3 of pyruvate and glyceraldehyde 3-phosphate to yield 1-deoxy-D-xylulose-5-phosphate (DXP). The protein is 1-deoxy-D-xylulose-5-phosphate synthase of Bacteroides fragilis (strain ATCC 25285 / DSM 2151 / CCUG 4856 / JCM 11019 / LMG 10263 / NCTC 9343 / Onslow / VPI 2553 / EN-2).